The chain runs to 303 residues: uncharacterized protein (303 aa).

A signal peptide spans 1-24 (MNRIALVFLYSLFLFNLAIGRVES). Residue Asn116 is glycosylated (N-linked (GlcNAc...) asparagine). Residues 124–179 (FTRQQQKKSHDDDDDDDDSDSDESKEEEEKKKRDRKHRRDKRQAITQGSQNNTDPN) are disordered. Residues 135 to 149 (DDDDDDDSDSDESKE) are compositionally biased toward acidic residues. Residues 155 to 164 (KRDRKHRRDK) show a composition bias toward basic residues. Residues 167 to 178 (AITQGSQNNTDP) are compositionally biased toward polar residues.

This is an uncharacterized protein from Caenorhabditis elegans.